The primary structure comprises 392 residues: 2-oxoisovalerate dehydrogenase subunit beta, mitochondrial (392 aa).

Residues 1–50 constitute a mitochondrion transit peptide; it reads MAVVAAAAGWLLRLRAAGAEGHWRRLPGAGLARGFLHPAATVEDAAQRRQ. Tyr-152 provides a ligand contact to thiamine diphosphate. K(+) is bound by residues Gly-178, Leu-180, Thr-181, Cys-228, and Asp-231. The residue at position 232 (Lys-232) is an N6-acetyllysine. Asn-233 is a K(+) binding site. Residue Lys-241 is modified to N6-acetyllysine.

In terms of assembly, heterotetramer of 2 alpha/BCKDHA and 2 beta chains/BCKDHB that forms the branched-chain alpha-keto acid decarboxylase (E1) component of the BCKD complex. The branched-chain alpha-ketoacid dehydrogenase is a large complex composed of three major building blocks E1, E2 and E3. It is organized around E2, a 24-meric cubic core composed of DBT, to which are associated 6 to 12 copies of E1, and approximately 6 copies of the dehydrogenase E3, a DLD dimer. Thiamine diphosphate is required as a cofactor.

It localises to the mitochondrion matrix. The catalysed reaction is N(6)-[(R)-lipoyl]-L-lysyl-[protein] + 3-methyl-2-oxobutanoate + H(+) = N(6)-[(R)-S(8)-2-methylpropanoyldihydrolipoyl]-L-lysyl-[protein] + CO2. Together with BCKDHA forms the heterotetrameric E1 subunit of the mitochondrial branched-chain alpha-ketoacid dehydrogenase (BCKD) complex. The BCKD complex catalyzes the multi-step oxidative decarboxylation of alpha-ketoacids derived from the branched-chain amino-acids valine, leucine and isoleucine producing CO2 and acyl-CoA which is subsequently utilized to produce energy. The E1 subunit catalyzes the first step with the decarboxylation of the alpha-ketoacid forming an enzyme-product intermediate. A reductive acylation mediated by the lipoylamide cofactor of E2 extracts the acyl group from the E1 active site for the next step of the reaction. In Homo sapiens (Human), this protein is 2-oxoisovalerate dehydrogenase subunit beta, mitochondrial.